The chain runs to 204 residues: Flavin-dependent thymidylate synthase (204 aa).

The 204-residue stretch at M1–G204 folds into the ThyX domain. Residues S50 and R74–R76 contribute to the FAD site. DUMP-binding positions include E71 to R74, S84 to R86, and K143. The ThyX motif signature appears at R74–S84. Residues N159 to R161 and N165 contribute to the FAD site. R170 contributes to the dUMP binding site. R170 serves as the catalytic Involved in ionization of N3 of dUMP, leading to its activation.

Belongs to the thymidylate synthase ThyX family. As to quaternary structure, homotetramer. It depends on FAD as a cofactor.

It catalyses the reaction dUMP + (6R)-5,10-methylene-5,6,7,8-tetrahydrofolate + NADPH + H(+) = dTMP + (6S)-5,6,7,8-tetrahydrofolate + NADP(+). The protein operates within pyrimidine metabolism; dTTP biosynthesis. In terms of biological role, catalyzes the reductive methylation of 2'-deoxyuridine-5'-monophosphate (dUMP) to 2'-deoxythymidine-5'-monophosphate (dTMP) while utilizing 5,10-methylenetetrahydrofolate (mTHF) as the methyl donor, and NADPH and FADH(2) as the reductant. This Wolinella succinogenes (strain ATCC 29543 / DSM 1740 / CCUG 13145 / JCM 31913 / LMG 7466 / NCTC 11488 / FDC 602W) (Vibrio succinogenes) protein is Flavin-dependent thymidylate synthase.